Reading from the N-terminus, the 205-residue chain is Large ribosomal subunit protein uL18 (205 aa).

The protein belongs to the universal ribosomal protein uL18 family. Part of the 50S ribosomal subunit. Contacts the 5S and 23S rRNAs.

Its function is as follows. This is one of the proteins that bind and probably mediate the attachment of the 5S RNA into the large ribosomal subunit, where it forms part of the central protuberance. The sequence is that of Large ribosomal subunit protein uL18 from Pyrobaculum aerophilum (strain ATCC 51768 / DSM 7523 / JCM 9630 / CIP 104966 / NBRC 100827 / IM2).